Consider the following 1071-residue polypeptide: MADSTLHQPAYPVRFVTSAALFDGHDAAINIMRRILQSQGAEVIHLGHNRAVHEVVAAAVEEDVQGVAVSSYQGGHVEYFEYLASALRDAGAGHVRVFGGGGGVIVPEEIERLARSGVRIFSPEDGQRLGLPGMINELIQTCDVDLTGERPAVEAVLAGERTALARVITCLQQDALPAADRDALLAAARDRTVPVLGITGTGGSGKSSLTDELVRRLRTDQQDKLRVAILAVDPTRRRGGGALLGDRIRMNSLDGTHVFFRSLATRGGHELPHDIDAVIAACKAAGYDLVILETPGIGQGDAAIVDHVDVAMYVMTPEFGAASQLEKIDMLDFADVVAINKFERRGGADAVRDVSRQLLRNREAFGADPADMPVFGTSAATFNDDGVTALYQHLLELLGARGLPVDEGVLPRVQTRVSTRFAQIIPTARVRYLAEIADTVRTYHARTRDQVAAAQRVQRLELVAAELPGDAAVADLLARARAELDPENAALLARWPEVAESYRGPEQVVRVRDREIRTTLRRESLSGSSIPRVALPRFTDHGELLRFLRSENLPGHFPFTAGVFPFKRDNEDPARMFAGEGDPFRTNRRFKVLSEHSEAKRLSTAFDSVTLYGRDPDERPDIYGKVGTSGVSIATVDDMKALYDGFDLTAPTTSVSMTINGPAPTILAFFLNTAIDQALDRFRAAEGREPTADEAADLRARTLATVRGTVQADILKEDQGQNTCIFSTEFSLRMMADIQEWFVRNKVRNFYSVSISGYHIAEAGANPISQLAFTLANGFTYVEAYLARGMHIDDFAPNLSFFFSNGMDPEYSVIGRVARRIWAIALRDKYGAAERSQKLKYHVQTSGRSLHAQEMNFNDIRTTLQALIAIYDNCNSLHTNAYDEAVTTPTEDSVRRALAIQLIINREWGLAMNENPLQGSFIIDELTDLAEEAVLTEFERISERGGVLGAMETGYQRGKIQDESMLYEHRKHDGSLPIIGVNTFRNPHGEPERTLELARATEREKQSQLDRVREFQRRHRTQAQAALARLEEVARTDENIFEVLMDAARVCSLQQVTETFFTVGGQYRRNV.

The 138-residue stretch at 12–149 folds into the B12-binding domain; the sequence is PVRFVTSAAL…QTCDVDLTGE (138 aa). Histidine 25 contacts adenosylcob(III)alamin. Residues 153–400 form a GTPase chaperone MeaI region; the sequence is VEAVLAGERT…YQHLLELLGA (248 aa). Position 203–208 (203–208) interacts with GTP; that stretch reads GSGKSS. Mg(2+) is bound by residues serine 207, valine 232, aspartate 233, and aspartate 246. Arginine 249 provides a ligand contact to GTP. Glutamate 293 and threonine 294 together coordinate Mg(2+). Position 340–343 (340–343) interacts with GTP; it reads NKFE. Residues 401-558 are linker; it reads RGLPVDEGVL…RSENLPGHFP (158 aa). Positions 566, 601, 707, 751, 800, 835, and 840 each coordinate substrate. Residues glutamate 952 and asparagine 1070 each contribute to the GTP site.

The protein belongs to the IcmF family. Homodimer. The cofactor is adenosylcob(III)alamin. Mg(2+) is required as a cofactor.

It carries out the reaction 2-methylpropanoyl-CoA = butanoyl-CoA. It catalyses the reaction GTP + H2O = GDP + phosphate + H(+). In terms of biological role, catalyzes the reversible interconversion of isobutyryl-CoA and n-butyryl-CoA, using radical chemistry. Also exhibits GTPase activity, associated with its G-protein domain (MeaI) that functions as a chaperone that assists cofactor delivery and proper holo-enzyme assembly. Does not exhibit methylmalonyl-CoA mutase (MCM) activity. In Nocardia farcinica (strain IFM 10152), this protein is Fused isobutyryl-CoA mutase.